We begin with the raw amino-acid sequence, 175 residues long: Shikimate kinase (175 aa).

Residue 12–19 (GGRASGKS) coordinates ATP.

This sequence belongs to the shikimate kinase family.

It localises to the cytoplasm. It catalyses the reaction shikimate + ATP = 3-phosphoshikimate + ADP + H(+). It participates in metabolic intermediate biosynthesis; chorismate biosynthesis; chorismate from D-erythrose 4-phosphate and phosphoenolpyruvate: step 5/7. This chain is Shikimate kinase, found in Nitratidesulfovibrio vulgaris (strain ATCC 29579 / DSM 644 / CCUG 34227 / NCIMB 8303 / VKM B-1760 / Hildenborough) (Desulfovibrio vulgaris).